A 170-amino-acid chain; its full sequence is Protein-export protein SecB (170 aa).

It belongs to the SecB family. Homotetramer, a dimer of dimers. One homotetramer interacts with 1 SecA dimer.

Its subcellular location is the cytoplasm. In terms of biological role, one of the proteins required for the normal export of preproteins out of the cell cytoplasm. It is a molecular chaperone that binds to a subset of precursor proteins, maintaining them in a translocation-competent state. It also specifically binds to its receptor SecA. The chain is Protein-export protein SecB from Xanthomonas campestris pv. campestris (strain 8004).